Consider the following 154-residue polypeptide: Large ribosomal subunit protein uL13 (154 aa).

It belongs to the universal ribosomal protein uL13 family. In terms of assembly, part of the 50S ribosomal subunit.

This protein is one of the early assembly proteins of the 50S ribosomal subunit, although it is not seen to bind rRNA by itself. It is important during the early stages of 50S assembly. In Rhodospirillum centenum (strain ATCC 51521 / SW), this protein is Large ribosomal subunit protein uL13.